We begin with the raw amino-acid sequence, 348 residues long: Small ribosomal subunit biogenesis GTPase RsgA (348 aa).

Positions Met1–Ile14 are enriched in basic residues. Residues Met1–Gly39 form a disordered region. A compositionally biased stretch (basic and acidic residues) spans Lys16–Gln31. The CP-type G domain occupies Phe116–Phe275. Residues Asn163–Asp166 and Gly217–Ser225 contribute to the GTP site. Zn(2+) is bound by residues Cys299, Cys304, His306, and Cys312.

This sequence belongs to the TRAFAC class YlqF/YawG GTPase family. RsgA subfamily. As to quaternary structure, monomer. Associates with 30S ribosomal subunit, binds 16S rRNA. Zn(2+) is required as a cofactor.

The protein resides in the cytoplasm. One of several proteins that assist in the late maturation steps of the functional core of the 30S ribosomal subunit. Helps release RbfA from mature subunits. May play a role in the assembly of ribosomal proteins into the subunit. Circularly permuted GTPase that catalyzes slow GTP hydrolysis, GTPase activity is stimulated by the 30S ribosomal subunit. The protein is Small ribosomal subunit biogenesis GTPase RsgA of Hahella chejuensis (strain KCTC 2396).